The primary structure comprises 149 residues: Small ribosomal subunit protein bS6 (149 aa).

The interval 94 to 149 (EKHEEGPSAMMQKRDRDDRPRRDGDRPDRGGFGDRGPRPDRGDRDDRPRRPREDRA) is disordered.

It belongs to the bacterial ribosomal protein bS6 family.

Functionally, binds together with bS18 to 16S ribosomal RNA. The sequence is that of Small ribosomal subunit protein bS6 from Sinorhizobium fredii (strain NBRC 101917 / NGR234).